A 493-amino-acid chain; its full sequence is MVSSVSLFASLTPYLVSALLLFLLLEQLFYRVKKRNLPGPLFVFPIIGNVVALIRDPTSFWDKQSAMADTSVGLSVNYLIGKFIIYIKDAELSNKVLSNIRPDAFQLTGHPFGKKLFGDHSLIFMFGEDHKSVRRQVAPNFTRKPLSAYSSLQQIVILRHLRQWEESFSSGSRPVSMRQLIRELNLETSQTVFVGPYLDKEVKKTICDDYSLLTLGTMAIPIDLPGFTFGEARQAVSRLVNTMSVCVGKSKAKMAAGENPTCLVDFWTHSIIEENPPPPHSKDKEISCVLVDFMFASQDASTSSLLWAVVMLESEPEVLRRVREDVARFWSSESNELITADQLAEMKYTRAVAREVLRYRPPASMIPHVAVSDFRLTESYTIPKGTIVFPSLFDASFQGFTEPDRFDPDRFSETRQEDEVFKRNFLTFGNGSHQCVGQRYAMNHLVLFIAMFSSMFDFKRVRSDGCDDIVHIPTMSPKDGCTVFLSSRLVTSP.

Residues 5-25 form a helical membrane-spanning segment; it reads VSLFASLTPYLVSALLLFLLL. Position 435 (Cys435) interacts with heme.

Belongs to the cytochrome P450 family. Requires heme as cofactor. As to expression, very weak expression in roots and root hairs. Not detected in the root tips.

The protein localises to the membrane. It carries out the reaction 5-dehydroepisterol + NADPH + O2 + H(+) = ergosta-5,7,22,24(28)-tetraen-3beta-ol + NADP(+) + 2 H2O. Its pathway is steroid biosynthesis; sterol biosynthesis. Functionally, required to form the C-22 double bond in the sterol side chain. Possesses C-22 desaturase activity toward beta-sitosterol and produces stigmasterol. In Arabidopsis thaliana (Mouse-ear cress), this protein is Cytochrome P450 710A4.